The chain runs to 332 residues: Aspartate carbamoyltransferase catalytic subunit (332 aa).

The segment at 1-20 is disordered; sequence MPNTHDTKNNVSPSEYAKFD. Positions 72 and 73 each coordinate carbamoyl phosphate. Residue Lys100 participates in L-aspartate binding. Arg122, His152, and Gln155 together coordinate carbamoyl phosphate. Residues Arg186 and Arg241 each contribute to the L-aspartate site. Carbamoyl phosphate-binding residues include Gly282 and Pro283.

The protein belongs to the aspartate/ornithine carbamoyltransferase superfamily. ATCase family. Heterododecamer (2C3:3R2) of six catalytic PyrB chains organized as two trimers (C3), and six regulatory PyrI chains organized as three dimers (R2).

The enzyme catalyses carbamoyl phosphate + L-aspartate = N-carbamoyl-L-aspartate + phosphate + H(+). The protein operates within pyrimidine metabolism; UMP biosynthesis via de novo pathway; (S)-dihydroorotate from bicarbonate: step 2/3. In terms of biological role, catalyzes the condensation of carbamoyl phosphate and aspartate to form carbamoyl aspartate and inorganic phosphate, the committed step in the de novo pyrimidine nucleotide biosynthesis pathway. The chain is Aspartate carbamoyltransferase catalytic subunit from Psychrobacter sp. (strain TAD1).